Here is a 227-residue protein sequence, read N- to C-terminus: 2,3-bisphosphoglycerate-dependent phosphoglycerate mutase (227 aa).

Residues 7–14 (RHGFSEWN), 20–21 (TG), R59, 86–89 (ERHY), K97, 113–114 (RR), and 182–183 (GN) contribute to the substrate site. The active-site Tele-phosphohistidine intermediate is H8. The active-site Proton donor/acceptor is the E86.

Belongs to the phosphoglycerate mutase family. BPG-dependent PGAM subfamily. In terms of assembly, homodimer.

It catalyses the reaction (2R)-2-phosphoglycerate = (2R)-3-phosphoglycerate. The protein operates within carbohydrate degradation; glycolysis; pyruvate from D-glyceraldehyde 3-phosphate: step 3/5. Its function is as follows. Catalyzes the interconversion of 2-phosphoglycerate and 3-phosphoglycerate. The protein is 2,3-bisphosphoglycerate-dependent phosphoglycerate mutase of Haemophilus influenzae (strain 86-028NP).